A 345-amino-acid chain; its full sequence is Methionine import ATP-binding protein MetN (345 aa).

Positions isoleucine 2 to isoleucine 241 constitute an ABC transporter domain. Glycine 38–serine 45 contributes to the ATP binding site.

Belongs to the ABC transporter superfamily. Methionine importer (TC 3.A.1.24) family. In terms of assembly, the complex is composed of two ATP-binding proteins (MetN), two transmembrane proteins (MetI) and a solute-binding protein (MetQ).

Its subcellular location is the cell inner membrane. It carries out the reaction L-methionine(out) + ATP + H2O = L-methionine(in) + ADP + phosphate + H(+). The enzyme catalyses D-methionine(out) + ATP + H2O = D-methionine(in) + ADP + phosphate + H(+). Its function is as follows. Part of the ABC transporter complex MetNIQ involved in methionine import. Responsible for energy coupling to the transport system. In Histophilus somni (strain 129Pt) (Haemophilus somnus), this protein is Methionine import ATP-binding protein MetN.